We begin with the raw amino-acid sequence, 398 residues long: Dual-specificity RNA methyltransferase RlmN (398 aa).

The Proton acceptor role is filled by Glu119. The Radical SAM core domain maps to Glu125–Asp364. An intrachain disulfide couples Cys132 to Cys369. Positions 139, 143, and 146 each coordinate [4Fe-4S] cluster. Residues Gly193–Glu194, Ser225, Ser247–His249, and Asn326 each bind S-adenosyl-L-methionine. Residue Cys369 is the S-methylcysteine intermediate of the active site.

Belongs to the radical SAM superfamily. RlmN family. It depends on [4Fe-4S] cluster as a cofactor.

The protein resides in the cytoplasm. The enzyme catalyses adenosine(2503) in 23S rRNA + 2 reduced [2Fe-2S]-[ferredoxin] + 2 S-adenosyl-L-methionine = 2-methyladenosine(2503) in 23S rRNA + 5'-deoxyadenosine + L-methionine + 2 oxidized [2Fe-2S]-[ferredoxin] + S-adenosyl-L-homocysteine. It catalyses the reaction adenosine(37) in tRNA + 2 reduced [2Fe-2S]-[ferredoxin] + 2 S-adenosyl-L-methionine = 2-methyladenosine(37) in tRNA + 5'-deoxyadenosine + L-methionine + 2 oxidized [2Fe-2S]-[ferredoxin] + S-adenosyl-L-homocysteine. Specifically methylates position 2 of adenine 2503 in 23S rRNA and position 2 of adenine 37 in tRNAs. m2A2503 modification seems to play a crucial role in the proofreading step occurring at the peptidyl transferase center and thus would serve to optimize ribosomal fidelity. The sequence is that of Dual-specificity RNA methyltransferase RlmN from Pectobacterium atrosepticum (strain SCRI 1043 / ATCC BAA-672) (Erwinia carotovora subsp. atroseptica).